The following is a 402-amino-acid chain: MSLKYYLNDLSDSDSESESECAEGSSPQDEQNGFYDYRSPPDSADTSIFEDTGRSSSERPMSPTEVCSTDFEEKVPFSSELVVIPESMLKKREEYGRFFSNFKKAIYHLPADEEEWDRQERLHQSFIEMFGRKYPPELSEILKSDEYYEKRCLDLGCGTGCWIKEVARDFPYCEAVGVDLVVVPDTRDFPPNLRCEMDDVNLGLQHFFGRFDVVHARLLSSGIKDYQLLIENIARTLRPGGLVELQEYDFHIYDCNRRRFELSTNELAPPWWPRWMTFFNEAIRKMQGDVDAATHLLKWVRTHPGFEQVRYEERWIPIIPGNLDPLEPMYARLQADVSVYLRSGRPLLLKSGLSEMEVDILENNAIREFYESETTQYTRLQCVCARRNNAVLDHLPPSYNFR.

Residues 1–70 (MSLKYYLNDL…MSPTEVCSTD (70 aa)) are disordered. Residues 11 to 21 (SDSDSESESEC) show a composition bias toward acidic residues.

The protein belongs to the methyltransferase superfamily. LaeA methyltransferase family.

Its subcellular location is the nucleus. The enzyme catalyses L-methionyl-[protein] + S-adenosyl-L-methionine = S-methyl-L-methionyl-[protein] + S-adenosyl-L-homocysteine. Its function is as follows. Methyltransferase that performs automethylation. No other methyl-accepting substrate has been identified yet. Acts as a global regulator for secondary metabolite gene expression. Negatively regulates the production of coprinoferrin, a structurally novel acylated tripeptide hydroxamate siderophore. This chain is Secondary metabolism regulator laeA, found in Coprinopsis cinerea (strain Okayama-7 / 130 / ATCC MYA-4618 / FGSC 9003) (Inky cap fungus).